The sequence spans 756 residues: MLTSNLGYPRIGENREWKKALESFWANDTTEEQLLATMKELRLNHLRVQQEQEVDLIPVGDFTLYDHVLDMAVMFGIIPKRFLQQGDTPTLSTYFAMARGSKNAQACEMTKWYNTNYHYIVPELHDAAPRLTKNAPLEAYLEAKNELGIDGKPVILGPYSFVKLAKGYEEDKLQETIQSLLPLYIQVIQELVDAGARSIQVDEPSLVTSISAREMALVTRIYEQINEAIADAPLFLQTYFDAVTFYEEVVSLPVKGIGLDFVHGGAKNLEALRTFGFPEDKVLAAGIIDGRNIWISNLRERHELVHQLEQHVAKDRLVLQPSCSLLHVPVTTKREEKLDPTLLGVLAFANEKLTELHTLKQLAAGNEAEVKEALEANDDALAALEKSGWRSGAATSHNLENKKRPQSFNERRPLQEEKWQLPLLPTTTIGSFPQTKDVRRTRSLWRKGELSTVEYERTMKSYIEKWINIQEELGLDVLVHGEFERNDMVEFFGEKLDGFAFTANGWVQSYGSRCVKPPIIYGNVSFTEPMTVAETVYAQSLTDKPVKGMLTGPVTILNWSFVRDDLPLTVIAHQIAEALTHEVTALEEAGIEMIQIDEPAIREGLPLKAEDQQEYLDWAVSAFRASCAHVKATTQIHTHMCYSEFHEMIEAIDDLDADVISIETSRSHGEMISAFEKTTYEKGIGLGVYDIHSPRVPSEEEMLNVIRRALTVLPASLFWVNPDCGLKTRAEKETVAALKNMVAAARAAREELKTKA.

5-methyltetrahydropteroyltri-L-glutamate contacts are provided by residues 15 to 18 (REWK) and Lys-111. Residues 392 to 411 (GAATSHNLENKKRPQSFNER) are disordered. Basic and acidic residues predominate over residues 399–411 (LENKKRPQSFNER). L-homocysteine contacts are provided by residues 429-431 (IGS) and Glu-482. L-methionine contacts are provided by residues 429–431 (IGS) and Glu-482. 5-methyltetrahydropteroyltri-L-glutamate is bound by residues 513 to 514 (RC) and Trp-559. Asp-597 serves as a coordination point for L-homocysteine. Asp-597 is an L-methionine binding site. Residue Glu-603 participates in 5-methyltetrahydropteroyltri-L-glutamate binding. His-639, Cys-641, and Glu-663 together coordinate Zn(2+). His-692 acts as the Proton donor in catalysis. Cys-724 is a Zn(2+) binding site.

This sequence belongs to the vitamin-B12 independent methionine synthase family. Zn(2+) is required as a cofactor.

It carries out the reaction 5-methyltetrahydropteroyltri-L-glutamate + L-homocysteine = tetrahydropteroyltri-L-glutamate + L-methionine. It functions in the pathway amino-acid biosynthesis; L-methionine biosynthesis via de novo pathway; L-methionine from L-homocysteine (MetE route): step 1/1. Functionally, catalyzes the transfer of a methyl group from 5-methyltetrahydrofolate to homocysteine resulting in methionine formation. The protein is 5-methyltetrahydropteroyltriglutamate--homocysteine methyltransferase of Halalkalibacterium halodurans (strain ATCC BAA-125 / DSM 18197 / FERM 7344 / JCM 9153 / C-125) (Bacillus halodurans).